A 388-amino-acid chain; its full sequence is MKIHEYQGKEILRKFGVAVPRGKPAFSVDEAVKVAQELGGPVWVVKAQIHAGGRGKGGGVKVAKSLEQVREYSNQILGMQLKTHQTGPEGQKVNRLLIEEGADIKKELYVGIVIDRVSQKVVVMASSEGGMDIEEVAEKTPEAIHKVAVEPSVGLQDAEADDLAKKIGVPDASIPQAREILKGLYKSFWETDASLAEINPLVLTGDGKVIALDAKFNFDSNALFRHPEIVAYRDLDEEDPAEIEASKFDLAYISLDGNIGCLVNGAGLAMATMDTIKLFGGEPANFLDVGGGATTEKVTEAFKLMLKNPGLKAILVNIFGGIMRCDVIAEGVIAGSKAVNLNVPLVVRMKGTNEDLGKKMLAESGLPIISADSMEEAAQKVVAAAAGK.

Residues 9-244 enclose the ATP-grasp domain; sequence KEILRKFGVA…LDEEDPAEIE (236 aa). ATP is bound by residues Lys46, 53-55, Glu99, Ala102, and Glu107; that span reads GRG. Mg(2+)-binding residues include Asn199 and Asp213. Substrate contacts are provided by residues Asn264 and 321–323; that span reads GIM.

The protein belongs to the succinate/malate CoA ligase beta subunit family. Heterotetramer of two alpha and two beta subunits. Mg(2+) is required as a cofactor.

The enzyme catalyses succinate + ATP + CoA = succinyl-CoA + ADP + phosphate. The catalysed reaction is GTP + succinate + CoA = succinyl-CoA + GDP + phosphate. The protein operates within carbohydrate metabolism; tricarboxylic acid cycle; succinate from succinyl-CoA (ligase route): step 1/1. In terms of biological role, succinyl-CoA synthetase functions in the citric acid cycle (TCA), coupling the hydrolysis of succinyl-CoA to the synthesis of either ATP or GTP and thus represents the only step of substrate-level phosphorylation in the TCA. The beta subunit provides nucleotide specificity of the enzyme and binds the substrate succinate, while the binding sites for coenzyme A and phosphate are found in the alpha subunit. This is Succinate--CoA ligase [ADP-forming] subunit beta from Burkholderia mallei (strain NCTC 10247).